A 371-amino-acid chain; its full sequence is Mitogen-activated protein kinase homolog MMK2 (371 aa).

Residues 37-323 form the Protein kinase domain; sequence VPPIRSVGRG…VDEALCHPYM (287 aa). Residues 43-51 and K66 each bind ATP; that span reads VGRGAYGIV. Catalysis depends on D163, which acts as the Proton acceptor. T195 is subject to Phosphothreonine. Residues 195-197 carry the TXY motif; that stretch reads TEY. Position 197 is a phosphotyrosine (Y197).

Belongs to the protein kinase superfamily. CMGC Ser/Thr protein kinase family. MAP kinase subfamily. The cofactor is Mg(2+). In terms of processing, dually phosphorylated on Thr-195 and Tyr-197, which activates the enzyme. Autophosphorylated.

It carries out the reaction L-seryl-[protein] + ATP = O-phospho-L-seryl-[protein] + ADP + H(+). The enzyme catalyses L-threonyl-[protein] + ATP = O-phospho-L-threonyl-[protein] + ADP + H(+). With respect to regulation, activated by tyrosine and threonine phosphorylation. This is Mitogen-activated protein kinase homolog MMK2 (MMK2) from Medicago sativa (Alfalfa).